Here is a 284-residue protein sequence, read N- to C-terminus: Nucleotide-binding protein Sputw3181_3461 (284 aa).

8-15 (GRSGSGKS) is a binding site for ATP. 56-59 (DVRN) contacts GTP.

It belongs to the RapZ-like family.

Its function is as follows. Displays ATPase and GTPase activities. This is Nucleotide-binding protein Sputw3181_3461 from Shewanella sp. (strain W3-18-1).